Here is a 330-residue protein sequence, read N- to C-terminus: Protein ANTHESIS POMOTING FACTOR 1 (330 aa).

WD repeat units lie at residues 22 to 61 (DFGG…QLKI), 112 to 151 (GHKD…CQGI), 153 to 191 (HLRG…KGPF), 198 to 237 (GDTA…KKCG), 242 to 281 (PSQG…EVAR), and 284 to 323 (NNIG…APAD).

The protein belongs to the WD repeat SWD2 family. Expressed in the shoot apical meristem (SAM), embryos, seedlings, cotyledons, leaves primordia, young leaves and roots.

The protein localises to the nucleus. Functionally, component of a chromatin regulatory complex involved in regulating chromatin structure in the nucleus. Promotes flowering under long days (LD) via the regulation of bolting. This Arabidopsis thaliana (Mouse-ear cress) protein is Protein ANTHESIS POMOTING FACTOR 1.